The following is a 239-amino-acid chain: Putative 3-methyladenine DNA glycosylase (239 aa).

The protein belongs to the DNA glycosylase MPG family.

The chain is Putative 3-methyladenine DNA glycosylase from Pseudomonas aeruginosa (strain ATCC 15692 / DSM 22644 / CIP 104116 / JCM 14847 / LMG 12228 / 1C / PRS 101 / PAO1).